A 272-amino-acid polypeptide reads, in one-letter code: 1,4-dihydroxy-2-naphthoyl-CoA synthase (272 aa).

Substrate-binding positions include Arg33, 72–76 (SGGDQ), Tyr84, 116–120 (YAIGG), Thr142, Ser148, Tyr245, and Lys260. 141 to 143 (QTG) is a binding site for hydrogencarbonate. A compositionally biased stretch (basic and acidic residues) spans 253 to 264 (GRDAFKEKRDPD). Residues 253 to 272 (GRDAFKEKRDPDFDQFPKFP) form a disordered region.

It belongs to the enoyl-CoA hydratase/isomerase family. MenB subfamily. It depends on hydrogencarbonate as a cofactor.

The enzyme catalyses 2-succinylbenzoyl-CoA + H(+) = 1,4-dihydroxy-2-naphthoyl-CoA + H2O. The protein operates within quinol/quinone metabolism; 1,4-dihydroxy-2-naphthoate biosynthesis; 1,4-dihydroxy-2-naphthoate from chorismate: step 6/7. It functions in the pathway quinol/quinone metabolism; menaquinone biosynthesis. Converts o-succinylbenzoyl-CoA (OSB-CoA) to 1,4-dihydroxy-2-naphthoyl-CoA (DHNA-CoA). This is 1,4-dihydroxy-2-naphthoyl-CoA synthase from Staphylococcus saprophyticus subsp. saprophyticus (strain ATCC 15305 / DSM 20229 / NCIMB 8711 / NCTC 7292 / S-41).